Consider the following 277-residue polypeptide: UPF0276 protein PSEEN3355 (277 aa).

Belongs to the UPF0276 family.

The sequence is that of UPF0276 protein PSEEN3355 from Pseudomonas entomophila (strain L48).